Here is a 314-residue protein sequence, read N- to C-terminus: Methionyl-tRNA formyltransferase (314 aa).

113–116 serves as a coordination point for (6S)-5,6,7,8-tetrahydrofolate; that stretch reads SLLP.

This sequence belongs to the Fmt family.

It catalyses the reaction L-methionyl-tRNA(fMet) + (6R)-10-formyltetrahydrofolate = N-formyl-L-methionyl-tRNA(fMet) + (6S)-5,6,7,8-tetrahydrofolate + H(+). Functionally, attaches a formyl group to the free amino group of methionyl-tRNA(fMet). The formyl group appears to play a dual role in the initiator identity of N-formylmethionyl-tRNA by promoting its recognition by IF2 and preventing the misappropriation of this tRNA by the elongation apparatus. The sequence is that of Methionyl-tRNA formyltransferase from Ectopseudomonas mendocina (strain ymp) (Pseudomonas mendocina).